A 792-amino-acid polypeptide reads, in one-letter code: MSVAKSIAAVLVALLPGALAQANTSYVDYNVEANPNLTPQSVATIDLSFPDCENGPLSKTLVCDTSARPHDRAAALVSMFTFEELVNNTGNTSPGVPRLGLPPYQVWSEALHGLDRANFTDEGEYSWATSFPMPILTMSALNRTLINQIATIIATQGRAFNNVGRYGLDVYAPNINAFRSAMWGRGQETPGEDAYCLASAYAYEYITGIQGGVDPEHLKLVATAKHYAGYDLENWDGHSRLGNDMNITQQELSEYYTPQFLVAARDAKVHSVMCSYNAVNGVPSCANSFFLQTLLRDTFGFVEDGYVSSDCDSAYNVWNPHEFAANITGAAADSIRAGTDIDCGTTYQYYFGEAFDEQEVTRAEIERGVIRLYSNLVRLGYFDGNGSVYRDLTWNDVVTTDAWNISYEAAVEGIVLLKNDGTLPLAKSVRSVALIGPWMNVTTQLQGNYFGPAPYLISPLNAFQNSDFDVNYAFGTNISSHSTDGFSEALSAAKKSDVIIFAGGIDNTLEAEAMDRMNITWPGNQLQLIDQLSQLGKPLIVLQMGGGQVDSSSLKSNKNVNSLIWGGYPGQSGGQALLDIITGKRAPAGRLVVTQYPAEYATQFPATDMSLRPHGNNPGQTYMWYTGTPVYEFGHGLFYTTFHASLPGTGKDKTSFNIQDLLTQPHPGFANVEQMPLLNFTVTITNTGKVASDYTAMLFANTTAGPAPYPNKWLVGFDRLASLEPHRSQTMTIPVTIDSVARTDEAGNRVLYPGKYELALNNERSVVLQFVLTGREAVIFKWPVEQQQISSA.

The N-terminal stretch at 1-20 (MSVAKSIAAVLVALLPGALA) is a signal peptide. N-linked (GlcNAc...) asparagine glycosylation is found at asparagine 23, asparagine 87, asparagine 118, asparagine 142, and asparagine 246. Residue aspartate 310 is part of the active site. N-linked (GlcNAc...) asparagine glycans are attached at residues asparagine 326, asparagine 385, asparagine 404, asparagine 440, asparagine 477, asparagine 518, asparagine 679, and asparagine 701.

The protein belongs to the glycosyl hydrolase 3 family.

It is found in the secreted. The catalysed reaction is Hydrolysis of (1-&gt;4)-beta-D-xylans, to remove successive D-xylose residues from the non-reducing termini.. It participates in glycan degradation; xylan degradation. Xylan 1,4-beta-xylosidase involved in the hydrolysis of xylan, a major structural heterogeneous polysaccharide found in plant biomass representing the second most abundant polysaccharide in the biosphere, after cellulose. The chain is Probable exo-1,4-beta-xylosidase xlnD (xlnD) from Aspergillus fumigatus (strain CBS 144.89 / FGSC A1163 / CEA10) (Neosartorya fumigata).